A 1116-amino-acid chain; its full sequence is DUB-associated factor 1 (1116 aa).

7 WD repeats span residues 21-62 (AHIL…NEPE), 91-132 (KNSD…DHDD), 160-200 (VHDG…EKMA), 219-262 (SMSP…EVIR), 266-305 (AHRT…DQTT), 387-426 (KKYG…FSVN), and 428-466 (GGFA…LLNT). Residues 578 to 600 (LDTGYNSESKKNNKDKKRKSTFK) form a disordered region. The residue at position 668 (Ser668) is a Phosphoserine. Thr693 bears the Phosphothreonine mark. Over residues 747-776 (ISSQDLPSNNTHNKLRSSENSRANSTSTLE) the composition is skewed to polar residues. Disordered stretches follow at residues 747–784 (ISSQ…KKPE) and 963–994 (FISA…PSTQ). Positions 967-987 (SDTTESSGNDSSDSSLGNGNE) are enriched in low complexity.

Interacts (via its WD repeats) with ubiquitin.

It localises to the cytoplasm. Ubiquitin-binding protein involved in the resistance to phenanthroline, sanguinarine, nordihydroguaiaretic acid (NDGA), isopropyl (N-3-chloro-phenyl)-carbamate (IPCPC) and guanosine 5'-O-(2-thiodiphosphate). The protein is DUB-associated factor 1 of Saccharomyces cerevisiae (strain ATCC 204508 / S288c) (Baker's yeast).